The chain runs to 269 residues: Mitochondrial scaffolding protein 1 (269 aa).

Positions 49 to 121 constitute a PDZ domain; the sequence is VVEIEKTSKG…HDEAVEVFRS (73 aa). Residues 143-185 form a disordered region; the sequence is RTQTPTASVSITPQVTPQTRSTQNNTDTPKSMSHSESKSRLTS. Residues 145–174 are compositionally biased toward polar residues; that stretch reads QTPTASVSITPQVTPQTRSTQNNTDTPKSM. A helical transmembrane segment spans residues 240–262; sequence WLTEALYVSIGLGALTISGYLAY.

It localises to the membrane. Functionally, plays a role in the regulation of lifespan in a partially daf-16-mediated manner, and may be involved in regulating the levels of reactive oxygen species production in response to heat stress. In Caenorhabditis elegans, this protein is Mitochondrial scaffolding protein 1.